Here is a 97-residue protein sequence, read N- to C-terminus: Co-chaperonin GroES (97 aa).

Belongs to the GroES chaperonin family. In terms of assembly, heptamer of 7 subunits arranged in a ring. Interacts with the chaperonin GroEL.

It localises to the cytoplasm. Together with the chaperonin GroEL, plays an essential role in assisting protein folding. The GroEL-GroES system forms a nano-cage that allows encapsulation of the non-native substrate proteins and provides a physical environment optimized to promote and accelerate protein folding. GroES binds to the apical surface of the GroEL ring, thereby capping the opening of the GroEL channel. The sequence is that of Co-chaperonin GroES from Arthrobacter sp. (strain FB24).